A 208-amino-acid polypeptide reads, in one-letter code: FMN-dependent NADH:quinone oxidoreductase (208 aa).

Residues 17–19, 99–102, and 143–146 contribute to the FMN site; these read SNS, MWNL, and SRGG.

The protein belongs to the azoreductase type 1 family. Homodimer. FMN serves as cofactor.

It carries out the reaction 2 a quinone + NADH + H(+) = 2 a 1,4-benzosemiquinone + NAD(+). The catalysed reaction is N,N-dimethyl-1,4-phenylenediamine + anthranilate + 2 NAD(+) = 2-(4-dimethylaminophenyl)diazenylbenzoate + 2 NADH + 2 H(+). Quinone reductase that provides resistance to thiol-specific stress caused by electrophilic quinones. Functionally, also exhibits azoreductase activity. Catalyzes the reductive cleavage of the azo bond in aromatic azo compounds to the corresponding amines. In Staphylococcus carnosus (strain TM300), this protein is FMN-dependent NADH:quinone oxidoreductase.